The following is a 343-amino-acid chain: Phosphoribosylformylglycinamidine cyclo-ligase (343 aa).

The protein belongs to the AIR synthase family.

It is found in the cytoplasm. The enzyme catalyses 2-formamido-N(1)-(5-O-phospho-beta-D-ribosyl)acetamidine + ATP = 5-amino-1-(5-phospho-beta-D-ribosyl)imidazole + ADP + phosphate + H(+). It functions in the pathway purine metabolism; IMP biosynthesis via de novo pathway; 5-amino-1-(5-phospho-D-ribosyl)imidazole from N(2)-formyl-N(1)-(5-phospho-D-ribosyl)glycinamide: step 2/2. This Carboxydothermus hydrogenoformans (strain ATCC BAA-161 / DSM 6008 / Z-2901) protein is Phosphoribosylformylglycinamidine cyclo-ligase.